The following is a 426-amino-acid chain: Delta-aminolevulinic acid dehydratase, chloroplastic (426 aa).

A chloroplast-targeting transit peptide spans 1-45; the sequence is MASTVSFSPANVQMLQGRSCHGHAAFGGCSAVPRTGPRMRSVAVR. The interval 74 to 107 is disordered; that stretch reads GRFPAPPPLVRPKAPEGTPQIRPLDLTKRPRRNR. The active-site Schiff-base intermediate with substrate is lysine 293. 2 residues coordinate 5-aminolevulinate: arginine 303 and lysine 315. Glutamate 331 contacts Mg(2+). Residue lysine 346 is the Schiff-base intermediate with substrate of the active site. 5-aminolevulinate-binding residues include serine 372 and tyrosine 411.

It belongs to the ALAD family. In terms of assembly, homooctamer. It depends on Mg(2+) as a cofactor.

Its subcellular location is the plastid. The protein resides in the chloroplast. The catalysed reaction is 2 5-aminolevulinate = porphobilinogen + 2 H2O + H(+). Its pathway is porphyrin-containing compound metabolism; protoporphyrin-IX biosynthesis; coproporphyrinogen-III from 5-aminolevulinate: step 1/4. Catalyzes an early step in the biosynthesis of tetrapyrroles. Binds two molecules of 5-aminolevulinate per subunit, each at a distinct site, and catalyzes their condensation to form porphobilinogen. In Oryza sativa subsp. japonica (Rice), this protein is Delta-aminolevulinic acid dehydratase, chloroplastic (HEMB).